Consider the following 64-residue polypeptide: Large ribosomal subunit protein bL35 (64 aa).

Disordered stretches follow at residues 1 to 22 (MPKA…TGKI) and 34 to 64 (EHKP…LLNG). Residues 34 to 48 (EHKPSTRTRRLDGHT) are compositionally biased toward basic and acidic residues. A compositionally biased stretch (polar residues) spans 50–64 (VSANDTQRVNSLLNG).

The protein belongs to the bacterial ribosomal protein bL35 family.

The protein is Large ribosomal subunit protein bL35 of Mycobacterium leprae (strain Br4923).